The chain runs to 473 residues: Photosystem II CP43 reaction center protein (473 aa).

The propeptide occupies 1–14 (MKTLYSLRRFYHVE). The residue at position 15 (Thr15) is an N-acetylthreonine. Residue Thr15 is modified to Phosphothreonine. 5 consecutive transmembrane segments (helical) span residues 69-93 (LFEV…PHLA), 134-155 (LLGP…KDRN), 178-200 (KALY…RKIT), 255-275 (KPFA…LSYS), and 291-312 (WFNN…ASQA). Position 367 (Glu367) interacts with [CaMn4O5] cluster. The helical transmembrane segment at 447–471 (RARAAAAGFEKGIDRDFEPVLSMTP) threads the bilayer.

It belongs to the PsbB/PsbC family. PsbC subfamily. As to quaternary structure, PSII is composed of 1 copy each of membrane proteins PsbA, PsbB, PsbC, PsbD, PsbE, PsbF, PsbH, PsbI, PsbJ, PsbK, PsbL, PsbM, PsbT, PsbX, PsbY, PsbZ, Psb30/Ycf12, at least 3 peripheral proteins of the oxygen-evolving complex and a large number of cofactors. It forms dimeric complexes. Requires Binds multiple chlorophylls and provides some of the ligands for the Ca-4Mn-5O cluster of the oxygen-evolving complex. It may also provide a ligand for a Cl- that is required for oxygen evolution. PSII binds additional chlorophylls, carotenoids and specific lipids. as cofactor.

The protein resides in the plastid. Its subcellular location is the chloroplast thylakoid membrane. Functionally, one of the components of the core complex of photosystem II (PSII). It binds chlorophyll and helps catalyze the primary light-induced photochemical processes of PSII. PSII is a light-driven water:plastoquinone oxidoreductase, using light energy to abstract electrons from H(2)O, generating O(2) and a proton gradient subsequently used for ATP formation. The sequence is that of Photosystem II CP43 reaction center protein from Aethionema cordifolium (Lebanon stonecress).